The primary structure comprises 94 residues: Co-chaperonin GroES (94 aa).

Belongs to the GroES chaperonin family. As to quaternary structure, heptamer of 7 subunits arranged in a ring. Interacts with the chaperonin GroEL.

It localises to the cytoplasm. Together with the chaperonin GroEL, plays an essential role in assisting protein folding. The GroEL-GroES system forms a nano-cage that allows encapsulation of the non-native substrate proteins and provides a physical environment optimized to promote and accelerate protein folding. GroES binds to the apical surface of the GroEL ring, thereby capping the opening of the GroEL channel. The chain is Co-chaperonin GroES from Geobacillus stearothermophilus (Bacillus stearothermophilus).